A 344-amino-acid polypeptide reads, in one-letter code: Zinc metalloproteinase nas-6 (344 aa).

Residues 1 to 19 (MLDHVLLLTYCLVSTVVRS) form the signal peptide. In terms of domain architecture, Peptidase M12A spans 72-266 (NALKNKQLTW…VKINKLYSCK (195 aa)). Disulfide bonds link Cys-114–Cys-265, Cys-135–Cys-154, Cys-300–Cys-334, Cys-307–Cys-327, and Cys-314–Cys-331. His-162 is a Zn(2+) binding site. Residue Glu-163 is part of the active site. His-166 and His-172 together coordinate Zn(2+). Residues 300–334 (CVDHFADCPHFAQYCTRASFFFVMKSYCPFTCKHC) form the ShKT domain.

It depends on Zn(2+) as a cofactor. As to expression, expressed in pharyngeal and body wall muscles, intestine, hypodermis and pharyngeal mc2 cells.

The protein resides in the secreted. Metalloprotease. This chain is Zinc metalloproteinase nas-6 (nas-6), found in Caenorhabditis elegans.